A 181-amino-acid chain; its full sequence is Inner membrane-spanning protein YciB (181 aa).

The next 5 membrane-spanning stretches (helical) occupy residues 22-42, 50-70, 80-100, 122-142, and 148-168; these read IYTATGALIIATAIQLVVTYA, MQLITFIMVTVFGGMTIFLHD, IVYCVFAAGLIIAHILGKPVI, WVLFFTVCAIANLYVAFEMPL, and FKVFGLLGLTFLYTLFTGMYV.

The protein belongs to the YciB family.

It is found in the cell inner membrane. In terms of biological role, plays a role in cell envelope biogenesis, maintenance of cell envelope integrity and membrane homeostasis. This Aliivibrio fischeri (strain ATCC 700601 / ES114) (Vibrio fischeri) protein is Inner membrane-spanning protein YciB.